The chain runs to 382 residues: Galactokinase (382 aa).

Residue glutamate 34 to aspartate 37 coordinates substrate. Residue glycine 124 to serine 130 coordinates ATP. Mg(2+) is bound by residues serine 130 and glutamate 162. Catalysis depends on aspartate 174, which acts as the Proton acceptor. Residue tyrosine 223 coordinates substrate.

It belongs to the GHMP kinase family. GalK subfamily.

Its subcellular location is the cytoplasm. It catalyses the reaction alpha-D-galactose + ATP = alpha-D-galactose 1-phosphate + ADP + H(+). It functions in the pathway carbohydrate metabolism; galactose metabolism. Catalyzes the transfer of the gamma-phosphate of ATP to D-galactose to form alpha-D-galactose-1-phosphate (Gal-1-P). The sequence is that of Galactokinase from Escherichia coli O157:H7 (strain EC4115 / EHEC).